We begin with the raw amino-acid sequence, 696 residues long: SLIT and NTRK-like protein 1 (696 aa).

Residues 1–17 (MLLWILLLETSLCFAAG) form the signal peptide. In terms of domain architecture, LRRNT 1 spans 18-57 (NVTGDVCKEKICSCNEIEGDLHVDCEKKGFTSLQRFTAPT). Residues 18 to 622 (NVTGDVCKEK…SRVSISVLVP (605 aa)) are Extracellular-facing. 6 LRR repeats span residues 59-80 (QFYHLFLHGNSLTRLFPNEFAN), 83-104 (NAVSLHMENNGLHEIVPGAFLG), 106-128 (QLVKRLHINNNKIKSFRKQTFLG), 131-152 (DLEYLQADFNLLRDIDPGAFQD), 155-176 (KLEVLILNDNLISTLPANVFQY), and 178-199 (PITHLDLRGNRLKTLPYEEVLE). Residues 212–263 (NPWDCTCDLLSLKEWLENIPKNALIGRVVCEAPTRLQGKDLNETTEQDLCPL) enclose the LRRCT 1 domain. Residues 265–314 (NRVDSSLPAPPAQEETFAPGPLPTPFKTNGQEDHATPGSAPNGGTKIPGN) are disordered. The 42-residue stretch at 332–373 (NKPLANSLPCPGGCSCDHIPGSGLKMNCNNRNVSSLADLKPK) folds into the LRRNT 2 domain. LRR repeat units lie at residues 376–397 (NVQELFLRDNKIHSIRKSHFVD), 400–421 (NLILLDLGNNNIATVENNTFKN), 424–445 (DLRWLYMDSNYLDTLSREKFAG), 448–469 (NLEYLNVEYNAIQLILPGTFNA), 472–493 (KLRILILNNNLLRSLPVDVFAG), and 495–516 (SLSKLSLHNNYFMYLPVAGVLD). The 52-residue stretch at 529–580 (NPWECSCTIVPFKQWAERLGSEVLMSDLKCETPVNFFRKDFMLLSNDEICPQ) folds into the LRRCT 2 domain. The chain crosses the membrane as a helical span at residues 623-643 (GLLLVFVTSAFTVVGMLVFIL). Residues 644–696 (RNRKRSKRRDANSSASEINSLQTVCDSSYWHNGPYNADGAHRVYDCGSHSLSD) are Cytoplasmic-facing. Ser695 is subject to Phosphoserine; by CK2.

It belongs to the SLITRK family. As to quaternary structure, can form homodimers; homodimerization requires repeat LRR 2. Interacts with YWHAB, YWHAE, YWHAG, YWHAH, SFN, YWHAQ and YWHAZ. Post-translationally, undergoes proteolytic cleavage that results in shedding of the ectodomain and cleavage of the C-terminal cytoplasmic tail. Glycosylated. Phosphorylation at Ser-695 is necessary for proper function in promoting neurite outgrowth. Expressed predominantly in the frontal lobe of the cerebral cortex of the brain. Also expressed in some astrocytic brain tumors such as astrocytomas, oligodendrogliomas, glioblastomas, gangliogliomas and primitive neuroectodermal tumors.

It is found in the membrane. The protein resides in the secreted. The protein localises to the synapse. It is involved in synaptogenesis and promotes excitatory synapse differentiation. Enhances neuronal dendrite outgrowth. The protein is SLIT and NTRK-like protein 1 (SLITRK1) of Homo sapiens (Human).